Reading from the N-terminus, the 432-residue chain is Trigger factor (432 aa).

A PPIase FKBP-type domain is found at 161 to 246 (EDRVTIDFTG…LKKVEERELP (86 aa)).

This sequence belongs to the FKBP-type PPIase family. Tig subfamily. As to quaternary structure, homodimer and monomer. In vivo most of the ribosomes are in complex with monomeric TF. Uncomplexed TF, however, is in a monomer-dimer equilibrium with approximately two thirds of TF existing in a dimeric state.

It localises to the cytoplasm. It carries out the reaction [protein]-peptidylproline (omega=180) = [protein]-peptidylproline (omega=0). Its function is as follows. Involved in protein export. Acts as a chaperone by maintaining the newly synthesized protein in an open conformation. Functions as a peptidyl-prolyl cis-trans isomerase. The protein is Trigger factor of Escherichia fergusonii (strain ATCC 35469 / DSM 13698 / CCUG 18766 / IAM 14443 / JCM 21226 / LMG 7866 / NBRC 102419 / NCTC 12128 / CDC 0568-73).